A 1328-amino-acid chain; its full sequence is 5'-3' exoribonuclease 1 (1328 aa).

The interval 1211 to 1328 (AGKNRKTNVS…VQPMGKLQIN (118 aa)) is disordered. Residues 1217-1231 (TNVSANNVSQGTDSR) show a composition bias toward polar residues. Residues 1275 to 1286 (HKSKSKFSKGNH) are compositionally biased toward basic residues.

The protein belongs to the 5'-3' exonuclease family. Monomer. Mg(2+) is required as a cofactor.

It localises to the cytoplasm. It is found in the perinuclear region. The protein localises to the P-body. With respect to regulation, strand exchange activity is enhanced by fatty acid synthase (stimulatory factor P190/210). Its function is as follows. Multifunctional protein that exhibits several independent functions at different levels of the cellular processes. 5'-3' exonuclease component of the nonsense-mediated mRNA decay (NMD) which is a highly conserved mRNA degradation pathway, an RNA surveillance system whose role is to identify and rid cells of mRNA with premature termination codons and thus prevents accumulation of potentially harmful truncated proteins. Involved in the degradation of several hypomodified mature tRNA species and participates in the 5'-processing or the degradation of the snoRNA precursors and rRNA processing. The protein is 5'-3' exoribonuclease 1 (exo2) of Schizosaccharomyces pombe (strain 972 / ATCC 24843) (Fission yeast).